A 271-amino-acid polypeptide reads, in one-letter code: Short-chain dehydrogenase/reductase SAT3 (271 aa).

Ser-17, Asp-40, and Asn-67 together coordinate NADP(+). Ser-153 acts as the Proton donor in catalysis. 3 residues coordinate NADP(+): Tyr-168, Lys-172, and Ser-203. Tyr-168 functions as the Proton acceptor in the catalytic mechanism. The active-site Lowers pKa of active site Tyr is Lys-172.

It belongs to the short-chain dehydrogenases/reductases (SDR) family.

It functions in the pathway mycotoxin biosynthesis. Short-chain dehydrogenase/reductase; part of the satratoxin SC1 cluster involved in the biosynthesis of satratoxins, trichothecene mycotoxins that are associated with human food poisonings. Satratoxins are suggested to be made by products of multiple gene clusters (SC1, SC2 and SC3) that encode 21 proteins in all, including polyketide synthases, acetyltransferases, and other enzymes expected to modify the trichothecene skeleton. SC1 encodes 10 proteins, SAT1 to SAT10. The largest are SAT8, which encodes a putative polyketide synthase (PKS) with a conventional non-reducing architecture, and SAT10, a putative protein containing four ankyrin repeats and thus may be involved in protein scaffolding. The putative short-chain reductase SAT3 may assist the PKS in some capacity. SAT6 contains a secretory lipase domain and acts probably as a trichothecene esterase. SAT5 encodes a putative acetyltransferase, and so, with SAT6, may affect endogenous protection from toxicity. The probable transcription factor SAT9 may regulate the expression of the SC1 cluster. SC2 encodes proteins SAT11 to SAT16, the largest of which encodes the putative reducing PKS SAT13. SAT11 is a cytochrome P450 monooxygenase, while SAT14 and SAT16 are probable acetyltransferases. The SC2 cluster may be regulated by the transcription factor SAT15. SC3 is a small cluster that encodes 5 proteins, SAT17 to SAT21. SAT21 is a putative MFS-type transporter which may have a role in exporting secondary metabolites. The four other proteins putatively encoded in SC3 include the taurine hydroxylase-like protein SAT17, the O-methyltransferase SAT18, the acetyltransferase SAT19, and the Cys6-type zinc finger SAT20, the latter being probably involved in regulation of SC3 expression. This is Short-chain dehydrogenase/reductase SAT3 from Stachybotrys chartarum (strain CBS 109288 / IBT 7711) (Toxic black mold).